The primary structure comprises 83 residues: MKVQHKKELKFYCIVTIPSAFVVLTVISFLLQEITFPVTASAFLNASWHNLLFLIPFGLFFYPVHIWMKREFGRWNDTEKKRG.

2 helical membrane passes run 11-31 and 48-68; these read FYCI…SFLL and WHNL…HIWM.

Its subcellular location is the cell membrane. This is an uncharacterized protein from Bacillus subtilis (strain 168).